The chain runs to 413 residues: Coiled-coil domain-containing protein 83 (413 aa).

A disordered region spans residues 1 to 21 (MENSGKANKKDTHDGPPKEIK). Residues 8-21 (NKKDTHDGPPKEIK) show a composition bias toward basic and acidic residues. Coiled coils occupy residues 37–184 (EDAV…RKKI) and 216–256 (WEND…LSNC).

In Homo sapiens (Human), this protein is Coiled-coil domain-containing protein 83 (CCDC83).